The following is a 478-amino-acid chain: Ribosome biogenesis protein NOP53 (478 aa).

Residues 1–10 (MAAGGSGVGG) are compositionally biased toward gly residues. Residues 1 to 51 (MAAGGSGVGGKRSSKSDADSGFLGLRPTSVDPALRRRRRGPRNKKRGWRRL) form a disordered region. Alanine 2 carries the N-acetylalanine modification. Serine 29 is subject to Phosphoserine. Basic residues predominate over residues 35-49 (RRRRRGPRNKKRGWR). Phosphoserine is present on residues serine 93 and serine 305. The mediates interaction with CDKN2A/isoform tumor suppressor ARF stretch occupies residues 148–431 (KEQLWEKLAK…SELTDSLRTL (284 aa)). The segment at 181–478 (KPGPQDTVER…EKRAFREIQL (298 aa)) is mediates interaction with NF2. Positions 303-344 (EESDGEGEPGQGEGPEAGDAEVCPTPARLATTEKKTEQQRRR) are disordered. The span at 333 to 342 (TTEKKTEQQR) shows a compositional bias: basic and acidic residues. The interval 342–386 (RRREKAVHRLRVQQAALRAARLRHQELFRLRGIKAQVALRLAELA) is mediates interaction with human herpesvirus 8 protein ORF16. Nucleolar localization signal stretches follow at residues 347 to 395 (AVHR…RQAR) and 396 to 478 (REAE…EIQL).

This sequence belongs to the NOP53 family. In terms of assembly, homooligomer. Interacts with PTEN; regulates PTEN phosphorylation and increases its stability. Interacts with RPL11; retains RPL11 into the nucleolus. Interacts with CDKN2A/isoform tumor suppressor ARF; the interaction is direct and promotes ARF nucleoplasmic relocalization and ubiquitin-mediated proteasomal degradation. Interacts with NPM1; the interaction is direct and competitive with MYC. Interacts with NF2 (via FERM domain); the interaction is direct. Interacts with p53/TP53 (via the oligomerization region); the interaction is direct and may prevent the MDM2-mediated proteasomal degradation of p53/TP53. Interacts with RIGI; may regulate RIGI through USP15-mediated 'Lys-63'-linked deubiquitination. Interacts with UBTF. As to quaternary structure, (Microbial infection) Interacts with herpes simplex virus 1 early proteins ICP22 and ICP0. (Microbial infection) Interacts with Human herpesvirus 8 protein ORF16; may sequester ORF16 in host nucleolus and reduce its antiapoptotic activity. In terms of processing, ubiquitin-mediated proteasomal degradation is regulated by c-JUN. It is associated with relocalization to the nucleoplasm and decreased homooligomerization. Post-translationally, phosphorylated upon DNA damage probably by ATM and DNA-PK; may regulate NOP53 degradation. As to expression, expressed at high levels in heart and pancreas, moderate levels in placenta, liver, skeletal muscle, and kidney, and low levels in brain and lung.

The protein localises to the nucleus. Its subcellular location is the nucleolus. It is found in the nucleoplasm. Functionally, nucleolar protein which is involved in the integration of the 5S RNP into the ribosomal large subunit during ribosome biogenesis. In ribosome biogenesis, may also play a role in rRNA transcription. Also functions as a nucleolar sensor that regulates the activation of p53/TP53 in response to ribosome biogenesis perturbation, DNA damage and other stress conditions. DNA damage or perturbation of ribosome biogenesis disrupt the interaction between NOP53 and RPL11 allowing RPL11 transport to the nucleoplasm where it can inhibit MDM2 and allow p53/TP53 activation. It may also positively regulate the function of p53/TP53 in cell cycle arrest and apoptosis through direct interaction, preventing its MDM2-dependent ubiquitin-mediated proteasomal degradation. Originally identified as a tumor suppressor, it may also play a role in cell proliferation and apoptosis by positively regulating the stability of PTEN, thereby antagonizing the PI3K-AKT/PKB signaling pathway. May also inhibit cell proliferation and increase apoptosis through its interaction with NF2. May negatively regulate NPM1 by regulating its nucleoplasmic localization, oligomerization and ubiquitin-mediated proteasomal degradation. Thereby, may prevent NPM1 interaction with MYC and negatively regulate transcription mediated by the MYC-NPM1 complex. May also regulate cellular aerobic respiration. In the cellular response to viral infection, may play a role in the attenuation of interferon-beta through the inhibition of RIGI. This chain is Ribosome biogenesis protein NOP53, found in Homo sapiens (Human).